Reading from the N-terminus, the 228-residue chain is 3-dehydroquinate dehydratase (228 aa).

3-dehydroquinate-binding positions include S26, 51–53, and R84; that span reads EIR. H127 (proton donor/acceptor) is an active-site residue. Catalysis depends on K150, which acts as the Schiff-base intermediate with substrate. 3-dehydroquinate is bound by residues R190, T209, and Q213.

The protein belongs to the type-I 3-dehydroquinase family. As to quaternary structure, homodimer.

The enzyme catalyses 3-dehydroquinate = 3-dehydroshikimate + H2O. It participates in metabolic intermediate biosynthesis; chorismate biosynthesis; chorismate from D-erythrose 4-phosphate and phosphoenolpyruvate: step 3/7. Involved in the third step of the chorismate pathway, which leads to the biosynthesis of aromatic amino acids. Catalyzes the cis-dehydration of 3-dehydroquinate (DHQ) and introduces the first double bond of the aromatic ring to yield 3-dehydroshikimate. This is 3-dehydroquinate dehydratase from Thermoplasma acidophilum (strain ATCC 25905 / DSM 1728 / JCM 9062 / NBRC 15155 / AMRC-C165).